Reading from the N-terminus, the 54-residue chain is Large ribosomal subunit protein bL33A (54 aa).

Belongs to the bacterial ribosomal protein bL33 family.

The polypeptide is Large ribosomal subunit protein bL33A (Streptomyces griseus subsp. griseus (strain JCM 4626 / CBS 651.72 / NBRC 13350 / KCC S-0626 / ISP 5235)).